The primary structure comprises 472 residues: Succinate-semialdehyde dehydrogenase [NADP(+)] (472 aa).

NADP(+) contacts are provided by residues 134–135 (WN), 158–161 (KHAS), and 210–211 (GS). E232 (proton acceptor) is an active-site residue. L233 provides a ligand contact to NADP(+). Catalysis depends on C266, which acts as the Nucleophile. E363 is a binding site for NADP(+).

The protein belongs to the aldehyde dehydrogenase family.

The catalysed reaction is succinate semialdehyde + NADP(+) + H2O = succinate + NADPH + 2 H(+). Functionally, catalyzes the NADP(+)-dependent oxidation of succinate semialdehyde to succinate. It is believed to be the main source of succinate semialdehyde dehydrogenase activity in Mycobacterium. This chain is Succinate-semialdehyde dehydrogenase [NADP(+)] (gabD1), found in Mycobacterium avium (strain 104).